We begin with the raw amino-acid sequence, 217 residues long: Neurotrophic factor BDNF precursor form (217 aa).

Residues 1–108 constitute a propeptide that is removed on maturation; sequence PMKEVSIRGQ…AANMSMRVRR (108 aa). Residue Asn101 is glycosylated (N-linked (GlcNAc...) asparagine). 2 cysteine pairs are disulfide-bonded: Cys121–Cys188 and Cys166–Cys217.

Belongs to the NGF-beta family.

Its subcellular location is the secreted. Promotes the survival of neuronal populations that are all located either in the central nervous system or directly connected to it. The sequence is that of Neurotrophic factor BDNF precursor form (BDNF) from Acrantophis dumerili (Dumeril's ground boa).